A 419-amino-acid polypeptide reads, in one-letter code: MNKIKVFKKNFFFEKIKNKKNNIEIKKSTNDSTSNTCTDIKNNIIIENKINEENIENNNNINIGNNSVNNNNINNNNNSINNNNNNNNKNKNKNNNSYIPMIQYSNIHCIDWSSLISVDKLDLGSSNIFLIATFLNNKCEYNQVLLKSSTTIVQEVYASVLESILKLPIPEMRLLEYSNDEYIQMSRSLLTISSKTNKSLYDYIKLELLKSFFLIMEYAPNGKSFKDLDYKEYFSGYGGEKKLNQLGQVIAFDIFCNNSDRLPLIWDNVSSHFSNILFYDIPNRNGWYISLMNSNVTCINNSSFTIGYRKYITRVKSILYALFKRPNIESNQIKKMRESISKSYKINLSSSCGISIQRGIIQGVQLIISRISISILSDTKEKLRHLVKVDSTTNAWKKGLDSIHLPFLSDLLDTMVLFY.

The interval 73-94 (INNNNNSINNNNNNNNKNKNKN) is disordered.

The protein belongs to the protein kinase superfamily. AFK Ser/Thr protein kinase family.

The sequence is that of Putative actin-fragmin kinase DDB_G0279609 from Dictyostelium discoideum (Social amoeba).